The sequence spans 210 residues: MKTLGKLIASKLIEVKAIKLQPNNPFTWASGWKAPIYCDNRKTLSYPQIRSLIKLELARVISETFGDVEAIAGVATGAIAQGALVADLLGLPFVYVRSSPKDHGLENLVEGELKPNSKVVVIEDLISTGGSSLKAAEAIRNFGCEVLGMVAVYTHGFPMAEQNFEKAEVKLVTLTDYDQVIEEALRTGYISAENVELLREWRKSPETWGI.

Residues R97, K101, H103, and 123-131 (EDLISTGGS) contribute to the 5-phospho-alpha-D-ribose 1-diphosphate site. Orotate is bound at residue S127.

It belongs to the purine/pyrimidine phosphoribosyltransferase family. PyrE subfamily. Homodimer. Mg(2+) serves as cofactor.

The enzyme catalyses orotidine 5'-phosphate + diphosphate = orotate + 5-phospho-alpha-D-ribose 1-diphosphate. Its pathway is pyrimidine metabolism; UMP biosynthesis via de novo pathway; UMP from orotate: step 1/2. Catalyzes the transfer of a ribosyl phosphate group from 5-phosphoribose 1-diphosphate to orotate, leading to the formation of orotidine monophosphate (OMP). In Porphyromonas gingivalis (strain ATCC BAA-308 / W83), this protein is Orotate phosphoribosyltransferase.